The sequence spans 102 residues: MKKVLGLVVAAAMGLSSAAFAAETATTPAPTATTTKAAPAKTTHHKKQHKAAPAQKAQAAKKHHKNTKAEQKAPEQKAQAAKKHAGKHSHQQPAKPAAQPAA.

A signal peptide spans 1–21 (MKKVLGLVVAAAMGLSSAAFA). Residues 22 to 41 (AETATTPAPTATTTKAAPAK) are compositionally biased toward low complexity. Positions 22–58 (AETATTPAPTATTTKAAPAKTTHHKKQHKAAPAQKAQ) are excised as a propeptide. The interval 22–102 (AETATTPAPT…PAKPAAQPAA (81 aa)) is disordered. A compositionally biased stretch (basic residues) spans 80 to 90 (AAKKHAGKHSH). Over residues 91–102 (QQPAKPAAQPAA) the composition is skewed to low complexity.

This sequence belongs to the Asr family. In terms of processing, proteolytic processing gives rise to the active protein.

It localises to the periplasm. Its function is as follows. Required for growth and/or survival at acidic conditions. This chain is Acid shock protein, found in Escherichia coli (strain SE11).